Consider the following 341-residue polypeptide: Tubulin beta chain (341 aa).

Positions 64, 68, 69, 70, 130, and 152 each coordinate GTP.

Belongs to the tubulin family. As to quaternary structure, dimer of alpha and beta chains. A typical microtubule is a hollow water-filled tube with an outer diameter of 25 nm and an inner diameter of 15 nM. Alpha-beta heterodimers associate head-to-tail to form protofilaments running lengthwise along the microtubule wall with the beta-tubulin subunit facing the microtubule plus end conferring a structural polarity. Microtubules usually have 13 protofilaments but different protofilament numbers can be found in some organisms and specialized cells. It depends on Mg(2+) as a cofactor.

It localises to the cytoplasm. The protein localises to the cytoskeleton. In terms of biological role, tubulin is the major constituent of microtubules, a cylinder consisting of laterally associated linear protofilaments composed of alpha- and beta-tubulin heterodimers. Microtubules grow by the addition of GTP-tubulin dimers to the microtubule end, where a stabilizing cap forms. Below the cap, tubulin dimers are in GDP-bound state, owing to GTPase activity of alpha-tubulin. The chain is Tubulin beta chain from Haliotis discus (Abalone).